The primary structure comprises 147 residues: Bis(5'-nucleosyl)-tetraphosphatase [asymmetrical] (147 aa).

Position 2 is an N-acetylalanine (A2). The 138-residue stretch at 2–139 (ALRACGLIIF…DMKAVLQEGH (138 aa)) folds into the Nudix hydrolase domain. The short motif at 43–64 (GHVEPGESDLQTALRETQEEAG) is the Nudix box element.

Belongs to the Nudix hydrolase family. It depends on a divalent metal cation as a cofactor.

The catalysed reaction is P(1),P(4)-bis(5'-guanosyl) tetraphosphate + H2O = GMP + GTP + 2 H(+). It carries out the reaction a 5'-end CoA-ribonucleoside in mRNA + H2O = a 5'-end phospho-adenosine-phospho-ribonucleoside in mRNA + (R)-4'-phosphopantetheine + 2 H(+). The enzyme catalyses a 5'-end FAD-phospho-ribonucleoside in mRNA + H2O = a 5'-end phospho-adenosine-phospho-ribonucleoside in mRNA + FMN + 2 H(+). Inhibited by fluoride ions. Functionally, catalyzes the asymmetric hydrolysis of diadenosine 5',5'''-P1,P4-tetraphosphate (Ap4A) to yield AMP and ATP. Exhibits decapping activity towards FAD-capped RNAs and dpCoA-capped RNAs in vitro. In Sus scrofa (Pig), this protein is Bis(5'-nucleosyl)-tetraphosphatase [asymmetrical] (NUDT2).